Here is a 191-residue protein sequence, read N- to C-terminus: Ribosome maturation factor RimM (191 aa).

One can recognise a PRC barrel domain in the interval 107-184 (EDDEWHQDDL…LVLVSPPPGL (78 aa)).

This sequence belongs to the RimM family. As to quaternary structure, binds ribosomal protein uS19.

It is found in the cytoplasm. Its function is as follows. An accessory protein needed during the final step in the assembly of 30S ribosomal subunit, possibly for assembly of the head region. Essential for efficient processing of 16S rRNA. May be needed both before and after RbfA during the maturation of 16S rRNA. It has affinity for free ribosomal 30S subunits but not for 70S ribosomes. This chain is Ribosome maturation factor RimM, found in Kocuria rhizophila (strain ATCC 9341 / DSM 348 / NBRC 103217 / DC2201).